A 422-amino-acid chain; its full sequence is Leucine-rich repeat protein 1 (422 aa).

LRR repeat units lie at residues leucine 184–leucine 207, histidine 209–serine 230, glutamine 233–glutamate 258, threonine 260–leucine 279, threonine 280–methionine 301, and leucine 304–valine 327.

Component of the probable ECS(LRR1) E3 ubiquitin-protein ligase complex which contains CUL2, RBX1, Elongin BC complex and LRR1. Interacts with CUL2, RBX1, ELOB and ELOC.

The protein resides in the nucleus. The protein operates within protein modification; protein ubiquitination. Its function is as follows. Substrate recognition subunit of an ECS (Elongin BC-CUL2/5-SOCS-box protein) E3 ubiquitin-protein ligase complex which mediates the ubiquitination and subsequent proteasomal degradation of target proteins. ECS(LRR1) ubiquitinates MCM7 and promotes CMG replisome disassembly by VCP and chromatin extraction during S-phase. May negatively regulate the 4-1BB-mediated signaling cascades which result in the activation of NK-kappaB and JNK1. The protein is Leucine-rich repeat protein 1 of Mus musculus (Mouse).